Reading from the N-terminus, the 357-residue chain is Quinolinate synthase (357 aa).

The iminosuccinate site is built by H50 and S71. C116 is a [4Fe-4S] cluster binding site. Iminosuccinate-binding positions include 142-144 (YAN) and S159. C203 serves as a coordination point for [4Fe-4S] cluster. Iminosuccinate-binding positions include 229–231 (HPE) and T246. A [4Fe-4S] cluster-binding site is contributed by C300.

Belongs to the quinolinate synthase family. Type 1 subfamily. The cofactor is [4Fe-4S] cluster.

It localises to the cytoplasm. The catalysed reaction is iminosuccinate + dihydroxyacetone phosphate = quinolinate + phosphate + 2 H2O + H(+). It participates in cofactor biosynthesis; NAD(+) biosynthesis; quinolinate from iminoaspartate: step 1/1. In terms of biological role, catalyzes the condensation of iminoaspartate with dihydroxyacetone phosphate to form quinolinate. In Shewanella sp. (strain MR-4), this protein is Quinolinate synthase.